A 276-amino-acid chain; its full sequence is Orotidine 5'-phosphate decarboxylase (276 aa).

Lysine 96 acts as the Proton donor in catalysis.

This sequence belongs to the OMP decarboxylase family. Type 2 subfamily.

The catalysed reaction is orotidine 5'-phosphate + H(+) = UMP + CO2. Its pathway is pyrimidine metabolism; UMP biosynthesis via de novo pathway; UMP from orotate: step 2/2. In Porphyromonas gingivalis (strain ATCC BAA-308 / W83), this protein is Orotidine 5'-phosphate decarboxylase.